The chain runs to 601 residues: ATP-dependent RNA helicase DeaD (601 aa).

Positions 6-34 match the Q motif motif; that stretch reads STFSFLGLNPFIIKSLSKMGYVKPSPIQA. The 172-residue stretch at 37 to 208 folds into the Helicase ATP-binding domain; sequence IPLLLEGRDV…KRFMKNPQEI (172 aa). ATP is bound at residue 50 to 57; that stretch reads AQTGSGKT. A DEAD box motif is present at residues 156-159; sequence DEAD. In terms of domain architecture, Helicase C-terminal spans 231–378; sequence KTDALIRFLE…EVQLPKIEVL (148 aa). A compositionally biased stretch (basic and acidic residues) spans 564-581; that stretch reads SIFNKDKNNKRRFSDNRL. The interval 564 to 601 is disordered; sequence SIFNKDKNNKRRFSDNRLNKSSSIKNETKSSFFRRKSV. Residues 582–594 are compositionally biased toward polar residues; the sequence is NKSSSIKNETKSS.

It belongs to the DEAD box helicase family. DeaD/CsdA subfamily.

It is found in the cytoplasm. The catalysed reaction is ATP + H2O = ADP + phosphate + H(+). DEAD-box RNA helicase involved in various cellular processes at low temperature, including ribosome biogenesis, mRNA degradation and translation initiation. The sequence is that of ATP-dependent RNA helicase DeaD from Buchnera aphidicola subsp. Schizaphis graminum (strain Sg).